The sequence spans 445 residues: Serine protease inhibitor A3F (445 aa).

N-linked (GlcNAc...) asparagine glycosylation is found at N28, N94, N174, and N259. Residues 357 to 382 (GTEAAAGTGYQNLQCCQGVIYSMKIY) form an RCL region.

This sequence belongs to the serpin family.

The chain is Serine protease inhibitor A3F (Serpina3f) from Mus musculus (Mouse).